A 164-amino-acid chain; its full sequence is Peptidyl-prolyl cis-trans isomerase A (164 aa).

The residue at position 1 (methionine 1) is an N-acetylmethionine. Residue valine 2 is modified to N-acetylvaline; in Peptidyl-prolyl cis-trans isomerase A, N-terminally processed. The PPIase cyclophilin-type domain occupies 7-163; the sequence is FFDITADGEP…KKITISDCGQ (157 aa). Lysine 28 bears the N6-acetyllysine; alternate mark. Lysine 28 is covalently cross-linked (Glycyl lysine isopeptide (Lys-Gly) (interchain with G-Cter in SUMO2); alternate). A Glycyl lysine isopeptide (Lys-Gly) (interchain with G-Cter in ubiquitin); alternate cross-link involves residue lysine 28. Residues lysine 44 and lysine 76 each carry the N6-acetyllysine modification. At serine 77 the chain carries Phosphoserine. Lysine 82 is modified (N6-acetyllysine; alternate). A Glycyl lysine isopeptide (Lys-Gly) (interchain with G-Cter in SUMO2); alternate cross-link involves residue lysine 82. Threonine 93 carries the post-translational modification Phosphothreonine. A glycan (N-linked (GlcNAc...) asparagine) is linked at asparagine 108. Lysine 125, lysine 131, and lysine 133 each carry N6-acetyllysine.

This sequence belongs to the cyclophilin-type PPIase family. PPIase A subfamily. As to quaternary structure, interacts with protein phosphatase PPP3CA/calcineurin A. Interacts with isoform 2 of BSG/CD147. Interacts with FOXO1; the interaction promotes FOXO1 dephosphorylation, nuclear accumulation and transcriptional activity. Interacts with integrin ITGA2B:ITGB3; the interaction is ROS and peptidyl-prolyl cis-trans isomerase (PPIase) activity-dependent and is increased in the presence of thrombin. Interacts with MAP3K5. Interacts with TARDBP; the interaction is dependent on the RNA-binding activity of TARDBP and the PPIase activity of PPIA/CYPA and the acetylation of PPIA/CYPA at Lys-125 favors the interaction. Interacts with HNRNPA1, HNRNPA2B1, HNRNPC, RBMX, HNRNPK and HNRNPM. In terms of processing, acetylation at Lys-125 markedly inhibits catalysis of cis to trans isomerization. PPIA acetylation also antagonizes the immunosuppressive effects of cyclosporine by inhibiting the sequential steps of cyclosporine binding and calcineurin inhibition. Acetylation at Lys-125 favors the interaction with TARDBP.

It localises to the cytoplasm. The protein resides in the secreted. It is found in the nucleus. It carries out the reaction [protein]-peptidylproline (omega=180) = [protein]-peptidylproline (omega=0). With respect to regulation, binds cyclosporin A (CsA). CsA mediates some of its effects via an inhibitory action on PPIase. Catalyzes the cis-trans isomerization of proline imidic peptide bonds in oligopeptides. Exerts a strong chemotactic effect on leukocytes partly through activation of one of its membrane receptors BSG/CD147, initiating a signaling cascade that culminates in MAPK/ERK activation. Activates endothelial cells (ECs) in a proinflammatory manner by stimulating activation of NF-kappa-B and ERK, JNK and p38 MAP-kinases and by inducing expression of adhesion molecules including SELE and VCAM1. Induces apoptosis in ECs by promoting the FOXO1-dependent expression of CCL2 and BCL2L11 which are involved in EC chemotaxis and apoptosis. In response to oxidative stress, initiates proapoptotic and antiapoptotic signaling in ECs via activation of NF-kappa-B and AKT1 and up-regulation of antiapoptotic protein BCL2. Negatively regulates MAP3K5/ASK1 kinase activity, autophosphorylation and oxidative stress-induced apoptosis mediated by MAP3K5/ASK1. Necessary for the assembly of TARDBP in heterogeneous nuclear ribonucleoprotein (hnRNP) complexes and regulates TARDBP binding to RNA UG repeats and TARDBP-dependent expression of HDAC6, ATG7 and VCP which are involved in clearance of protein aggregates. Plays an important role in platelet activation and aggregation. Regulates calcium mobilization and integrin ITGA2B:ITGB3 bidirectional signaling via increased ROS production as well as by facilitating the interaction between integrin and the cell cytoskeleton. Binds heparan sulfate glycosaminoglycans. In Rattus norvegicus (Rat), this protein is Peptidyl-prolyl cis-trans isomerase A (Ppia).